Here is a 191-residue protein sequence, read N- to C-terminus: Shikimate kinase (191 aa).

24-29 (GSGKTS) provides a ligand contact to ATP. Mg(2+) is bound at residue Thr-28. Asp-46, Arg-70, and Gly-92 together coordinate substrate. Arg-130 is a binding site for ATP. Substrate is bound at residue Arg-149.

The protein belongs to the shikimate kinase family. Monomer. Requires Mg(2+) as cofactor.

The protein resides in the cytoplasm. The catalysed reaction is shikimate + ATP = 3-phosphoshikimate + ADP + H(+). Its pathway is metabolic intermediate biosynthesis; chorismate biosynthesis; chorismate from D-erythrose 4-phosphate and phosphoenolpyruvate: step 5/7. Catalyzes the specific phosphorylation of the 3-hydroxyl group of shikimic acid using ATP as a cosubstrate. This Synechococcus sp. (strain CC9902) protein is Shikimate kinase.